The following is a 735-amino-acid chain: Catalase-peroxidase (735 aa).

Residues 1–25 form a disordered region; it reads MSDSKCPVTGKSSRQVAGGGTSNRD. Residues 95–223 constitute a cross-link (tryptophyl-tyrosyl-methioninium (Trp-Tyr) (with M-249)); that stretch reads WHSAGTYRMG…LAAVQMGLIY (129 aa). Histidine 96 acts as the Proton acceptor in catalysis. A cross-link (tryptophyl-tyrosyl-methioninium (Tyr-Met) (with W-95)) is located at residues 223–249; the sequence is YINPEGPDGNPDPVASGRDVRETFARM. Residue histidine 264 participates in heme b binding.

It belongs to the peroxidase family. Peroxidase/catalase subfamily. Homodimer or homotetramer. Heme b is required as a cofactor. In terms of processing, formation of the three residue Trp-Tyr-Met cross-link is important for the catalase, but not the peroxidase activity of the enzyme.

It catalyses the reaction H2O2 + AH2 = A + 2 H2O. The enzyme catalyses 2 H2O2 = O2 + 2 H2O. Its function is as follows. Bifunctional enzyme with both catalase and broad-spectrum peroxidase activity. The sequence is that of Catalase-peroxidase from Trichlorobacter lovleyi (strain ATCC BAA-1151 / DSM 17278 / SZ) (Geobacter lovleyi).